The primary structure comprises 135 residues: MAKTLGLHILADLYGVDADKIDRVEDIRELLEGAVKYANLTKISSHYYQFQPHGATGVVLLAESHISIHTWPEHGLATVDVYTCGDPSKAYRAMDYIITQLNPKRIDKQVHERGIVEEESNQSEAEKLRSILLQV.

The Schiff-base intermediate with substrate; via pyruvic acid role is filled by serine 64. A Pyruvic acid (Ser); by autocatalysis modification is found at serine 64. Catalysis depends on histidine 69, which acts as the Proton acceptor; for processing activity. The Proton donor; for catalytic activity role is filled by cysteine 84.

Belongs to the prokaryotic AdoMetDC family. Type 1 subfamily. In terms of assembly, heterotetramer of two alpha and two beta chains arranged as a dimer of alpha/beta heterodimers. Pyruvate serves as cofactor. In terms of processing, is synthesized initially as an inactive proenzyme. Formation of the active enzyme involves a self-maturation process in which the active site pyruvoyl group is generated from an internal serine residue via an autocatalytic post-translational modification. Two non-identical subunits are generated from the proenzyme in this reaction, and the pyruvate is formed at the N-terminus of the alpha chain, which is derived from the carboxyl end of the proenzyme. The post-translation cleavage follows an unusual pathway, termed non-hydrolytic serinolysis, in which the side chain hydroxyl group of the serine supplies its oxygen atom to form the C-terminus of the beta chain, while the remainder of the serine residue undergoes an oxidative deamination to produce ammonia and the pyruvoyl group blocking the N-terminus of the alpha chain.

The enzyme catalyses S-adenosyl-L-methionine + H(+) = S-adenosyl 3-(methylsulfanyl)propylamine + CO2. Its pathway is amine and polyamine biosynthesis; S-adenosylmethioninamine biosynthesis; S-adenosylmethioninamine from S-adenosyl-L-methionine: step 1/1. Its function is as follows. Catalyzes the decarboxylation of S-adenosylmethionine to S-adenosylmethioninamine (dcAdoMet), the propylamine donor required for the synthesis of the polyamines spermine and spermidine from the diamine putrescine. The polypeptide is S-adenosylmethionine decarboxylase proenzyme (Aquifex aeolicus (strain VF5)).